The following is a 91-amino-acid chain: Small ribosomal subunit protein uS19 (91 aa).

Belongs to the universal ribosomal protein uS19 family.

Functionally, protein S19 forms a complex with S13 that binds strongly to the 16S ribosomal RNA. In Methylibium petroleiphilum (strain ATCC BAA-1232 / LMG 22953 / PM1), this protein is Small ribosomal subunit protein uS19.